The following is an 897-amino-acid chain: Interleukin enhancer-binding factor 3-A (897 aa).

In terms of domain architecture, DZF spans 5 to 379 (RIFLNDDRHV…PLKRPIEEDG (375 aa)). Disordered regions lie at residues 52–85 (QEKD…GENP), 364–403 (TTYA…PPQV), and 466–502 (MGLP…EVDS). Basic and acidic residues-rich tracts occupy residues 72-81 (EEGKDSEMKT) and 373-384 (RPIEEDGDDKSP). The short motif at 372-390 (KRPIEEDGDDKSPSKKKKK) is the Bipartite nuclear localization signal element. DRBM domains lie at 399–468 (EPPQ…DMGL) and 521–587 (HGKN…KLFP). 2 disordered regions span residues 627–650 (PPPQ…GRGG) and 708–797 (GDSY…AQGA). Gly residues predominate over residues 637–650 (RGGMNRGRGRGRGG). Residues 714 to 747 (PTPPKPFVNKKPPPPQQQQQQQPPPQHASNPPKP) are compositionally biased toward pro residues. Low complexity predominate over residues 749 to 794 (YNQGYQGHQGGQQQQQQQQQQQTYNQNQYSNYGPPQKQKGGYNQGA).

A component of a ybx2/frgy2-containing mRNA-ribonucleoprotein (mRNP) complex. Also a component of the CCAAT box transcription factor (CBTF) complex. In terms of processing, phosphorylated. Phosphorylation affects nuclear translocation. Post-translationally, methylated by protein arginine N-methyltransferase 1 (prmt1b) in the RGG-rich domain. Methylation decreases DNA-binding and thereby decreases transcription of the gata2 gene, but does not regulate dsRNA binding or subcellular localization. Expressed mainly in the ectoderm (at protein level).

The protein resides in the nucleus. The protein localises to the cytoplasm. Its function is as follows. RNA-binding protein that plays an essential role in the biogenesis of circular RNAs (circRNAs) which are produced by back-splicing circularization of pre-mRNAs. Within the nucleus, promotes circRNAs processing by stabilizing the regulatory elements residing in the flanking introns of the circularized exons. Plays thereby a role in the back-splicing of a subset of circRNAs. As a consequence, participates in a wide range of transcriptional and post-transcriptional processes. Binds to poly-U elements and AU-rich elements (AREs) in the 3'-UTR of target mRNAs. Upon viral infection, ILF3 accumulates in the cytoplasm and participates in the innate antiviral response. Mechanistically, ILF3 becomes phosphorylated and activated by the double-stranded RNA-activated protein kinase/PKR which releases ILF3 from cellular mature circRNAs. In turn, unbound ILF3 molecules are able to interact with and thus inhibit viral mRNAs. Has a cytoplasmic role early in development as part of a ribonucleoprotein (mRNP) complex which may regulate mRNA transport and/or translation. Following nuclear localization at the mid-blastula transition, acts as a transcription factor and binds the 5'-CCAAT-3' promoter sequence to regulate transcription of the gata2 gene as a subunit of the CCAAT box transcription factor (CBTF). Its role as an mRNP component negatively regulates its activity as a transcription factor by precluding its nuclear localization. The protein is Interleukin enhancer-binding factor 3-A (ilf3-a) of Xenopus laevis (African clawed frog).